A 1020-amino-acid chain; its full sequence is Sodium/potassium-transporting ATPase subunit alpha-2 (1020 aa).

Residues 1–5 (MGRGA) constitute a propeptide that is removed on maturation. A disordered region spans residues 1 to 31 (MGRGAGREYSPAATTAENGGGKKKQKEKELD). Over 6–85 (GREYSPAATT…NALTPPPTTP (80 aa)) the chain is Cytoplasmic. Phosphoserine is present on serine 10. The interaction with phosphoinositide-3 kinase stretch occupies residues 80 to 82 (PPP). The helical transmembrane segment at 86-106 (EWVKFCRQLFGGFSILLWIGA) threads the bilayer. The Extracellular portion of the chain corresponds to 107-129 (ILCFLAYGIQAAMEDEPSNDNLY). Residues 130–150 (LGVVLAAVVIVTGCFSYYQEA) traverse the membrane as a helical segment. Residues 151–286 (KSSKIMDSFK…VGRTPIAMEI (136 aa)) are Cytoplasmic-facing. The segment covering 212-227 (DNSSLTGESEPQTRSP) has biased composition (polar residues). The segment at 212–231 (DNSSLTGESEPQTRSPEFTH) is disordered. Residues 287-306 (EHFIQLITGVAVFLGVSFFV) form a helical membrane-spanning segment. The Extracellular portion of the chain corresponds to 307–318 (LSLILGYSWLEA). Residues 319–336 (VIFLIGIIVANVPEGLLA) form a helical membrane-spanning segment. The Cytoplasmic segment spans residues 337-769 (TVTVCLTLTA…EEGRLIFDNL (433 aa)). The active-site 4-aspartylphosphate intermediate is aspartate 374. Residues serine 439, serine 450, and serine 559 each carry the phosphoserine modification. Threonine 570 is modified (phosphothreonine). 2 positions are modified to phosphoserine: serine 587 and serine 672. Aspartate 714 and aspartate 718 together coordinate Mg(2+). Residues 770–789 (KKSIAYTLTSNIPEITPFLL) traverse the membrane as a helical segment. Residues 790 to 799 (FIIANIPLPL) are Extracellular-facing. The chain crosses the membrane as a helical span at residues 800–820 (GTVTILCIDLGTDMVPAISLA). At 821–840 (YEAAESDIMKRQPRNPQTDK) the chain is on the cytoplasmic side. Residue serine 826 is modified to Phosphoserine. The chain crosses the membrane as a helical span at residues 841–863 (LVNERLISMAYGQIGMIQALGGF). Topologically, residues 864–915 (FTYFVILAENGFLPSRLLGIRLDWDDRSMNDLEDSYGQEWTYEQRKVVEFTC) are extracellular. Residues 916 to 935 (HTAFFASIVVVQWADLIICK) form a helical membrane-spanning segment. Residues 936 to 948 (TRRNSVFQQGMKN) lie on the Cytoplasmic side of the membrane. Serine 940 bears the Phosphoserine; by PKA mark. Residues 949 to 967 (KILIFGLLEETALAAFLSY) traverse the membrane as a helical segment. At 968–982 (CPGMGVALRMYPLKV) the chain is on the extracellular side. Residues 983–1003 (TWWFCAFPYSLLIFIYDEVRK) traverse the membrane as a helical segment. Residues 1004 to 1020 (LILRRYPGGWVEKETYY) are Cytoplasmic-facing.

This sequence belongs to the cation transport ATPase (P-type) (TC 3.A.3) family. Type IIC subfamily. As to quaternary structure, the sodium/potassium-transporting ATPase is composed of a catalytic alpha subunit, an auxiliary non-catalytic beta subunit and an additional regulatory subunit. Interacts with regulatory subunit FXYD1.

Its subcellular location is the membrane. It localises to the cell membrane. The enzyme catalyses K(+)(out) + Na(+)(in) + ATP + H2O = K(+)(in) + Na(+)(out) + ADP + phosphate + H(+). Functionally, this is the catalytic component of the active enzyme, which catalyzes the hydrolysis of ATP coupled with the exchange of sodium and potassium ions across the plasma membrane. This action creates the electrochemical gradient of sodium and potassium, providing the energy for active transport of various nutrients. This chain is Sodium/potassium-transporting ATPase subunit alpha-2 (ATP1A2), found in Sus scrofa (Pig).